The primary structure comprises 313 residues: Olfactory receptor 1J4 (313 aa).

Residues 1 to 25 (MKRENQSSVSEFLLLDLPIWPEQQA) are Extracellular-facing. N5 carries N-linked (GlcNAc...) asparagine glycosylation. A helical membrane pass occupies residues 26-49 (VFFTLFLGMYLITVLGNLLIILLI). Over 50–57 (RLDSHLHT) the chain is Cytoplasmic. A helical membrane pass occupies residues 58 to 79 (PMFFFLSHLALTDISLSSVTVP). Residues 80-100 (KMLLSMQTQDQSILYAGCVTQ) are Extracellular-facing. C97 and C189 are joined by a disulfide. A helical membrane pass occupies residues 101–120 (MYFFIFFTDLDNFLLTSMAY). The Cytoplasmic segment spans residues 121-139 (DRYVAICHPLRYTTIMKEG). Residues 140–158 (LCNLLVTVSWILSCTNALS) traverse the membrane as a helical segment. Residues 159 to 195 (HTLLLAQLSFCADNTIPHFFCDLVALLKLSCSDISLN) are Extracellular-facing. The helical transmembrane segment at 196-219 (ELVIFTVGQAVITLPLICILISYG) threads the bilayer. At 220-236 (HIGVTILKAPSTKGIFK) the chain is on the cytoplasmic side. The chain crosses the membrane as a helical span at residues 237–259 (ALSTCGSHLSVVSLYYGTIIGLY). Topologically, residues 260-272 (FLPSSSASSDKDV) are extracellular. The chain crosses the membrane as a helical span at residues 273–292 (IASVMYTVITPLLNPFIYSL). Topologically, residues 293–313 (RNRDIKGALERLFNRATVLSQ) are cytoplasmic.

This sequence belongs to the G-protein coupled receptor 1 family.

It is found in the cell membrane. In terms of biological role, odorant receptor. The polypeptide is Olfactory receptor 1J4 (OR1J4) (Homo sapiens (Human)).